A 519-amino-acid chain; its full sequence is MRLPSIATLFHPLQSFSIRGGIHPETHKHLTSECEIETMPMPALIRLPLQQHIGAEAEPIVKRDDLVLKGQLIAKARGPLSANIHAPTSGRVIAVGHFVAPHASGLPVPTITIRPDGEDKWGPHLPRLRPENAAPEEIAAQVAAAGIVGMGGATFPSAVKLNLRAKYDLTTLIINGAECEPYLTCDDRLMRERAEEIADGIGIMARALGVKQVFVAIESNKPQAIEAMTRYNRALGYTFKIHVVPTQYPMGSEKHLVKMITGQETPARALTADLGVVVHNIATAHAVHLAVRYGEPLIARTVTVSGHGIRRPANLRVLIGTPVSEIIAHCGGFTEEPDRLLLGGPMMGMPIQNPRVPVVKGTNGILALTAAETPEAKTMPCIRCGRCVQGCPVGLTPFELNARIHAGDLEGAAKVGLMDCLACGCCSYNCPANLPLVQSFQFAKGKLSERQSRKHQQEETKRLAAARKAREEAIAEAKKQMMLKRKAEMAAKKKAEEAAAAAAMPPPATATAIQGEATP.

2 consecutive 4Fe-4S ferredoxin-type domains span residues 372-401 and 411-440; these read ETPE…FELN and GAAK…VQSF. The [4Fe-4S] cluster site is built by C381, C384, C387, C391, C420, C423, C426, and C430. The segment at 494–519 is disordered; that stretch reads KAEEAAAAAAMPPPATATAIQGEATP.

It belongs to the 4Fe4S bacterial-type ferredoxin family. RnfC subfamily. The complex is composed of six subunits: RnfA, RnfB, RnfC, RnfD, RnfE and RnfG. [4Fe-4S] cluster serves as cofactor.

Its subcellular location is the cellular chromatophore membrane. Part of a membrane-bound complex that couples electron transfer with translocation of ions across the membrane. Required for nitrogen fixation. Involved in electron transfer to nitrogenase. The polypeptide is Ion-translocating oxidoreductase complex subunit C (Rhodobacter capsulatus (Rhodopseudomonas capsulata)).